We begin with the raw amino-acid sequence, 199 residues long: N-(5'-phosphoribosyl)anthranilate isomerase (199 aa).

Belongs to the TrpF family.

The catalysed reaction is N-(5-phospho-beta-D-ribosyl)anthranilate = 1-(2-carboxyphenylamino)-1-deoxy-D-ribulose 5-phosphate. It participates in amino-acid biosynthesis; L-tryptophan biosynthesis; L-tryptophan from chorismate: step 3/5. This Sulfolobus acidocaldarius (strain ATCC 33909 / DSM 639 / JCM 8929 / NBRC 15157 / NCIMB 11770) protein is N-(5'-phosphoribosyl)anthranilate isomerase.